A 148-amino-acid polypeptide reads, in one-letter code: uncharacterized protein (148 aa).

This is an uncharacterized protein from Archaeoglobus fulgidus (strain ATCC 49558 / DSM 4304 / JCM 9628 / NBRC 100126 / VC-16).